Reading from the N-terminus, the 113-residue chain is Large ribosomal subunit protein bL19 (113 aa).

Belongs to the bacterial ribosomal protein bL19 family.

Functionally, this protein is located at the 30S-50S ribosomal subunit interface and may play a role in the structure and function of the aminoacyl-tRNA binding site. This chain is Large ribosomal subunit protein bL19, found in Mycolicibacterium vanbaalenii (strain DSM 7251 / JCM 13017 / BCRC 16820 / KCTC 9966 / NRRL B-24157 / PYR-1) (Mycobacterium vanbaalenii).